Consider the following 365-residue polypeptide: Poly(rC)-binding protein 2 (365 aa).

KH domains lie at 13–75 and 97–162; these read TLTI…FAMI and PVTL…VKQI. A Glycyl lysine isopeptide (Lys-Gly) (interchain with G-Cter in SUMO2) cross-link involves residue Lys-115. Ser-173 bears the Phosphoserine mark. Lys-185 is covalently cross-linked (Glycyl lysine isopeptide (Lys-Gly) (interchain with G-Cter in SUMO2)). Phosphoserine occurs at positions 189 and 272. The KH 3 domain occupies 287–351; the sequence is TTSHELTIPN…ASISLAQYLI (65 aa). Residue Lys-322 forms a Glycyl lysine isopeptide (Lys-Gly) (interchain with G-Cter in SUMO2) linkage. Ser-364 and Ser-365 each carry phosphoserine.

As to quaternary structure, identified in a mRNP complex, at least composed of DHX9, DDX3X, ELAVL1, HNRNPU, IGF2BP1, ILF3, PABPC1, PCBP2, PTBP2, STAU1, STAU2, SYNCRIP and YBX1. Interacts with IFIH1 and RNF135. Interacts with MAVS (via C-terminus) and ITCH (via WW domains). Interacts with CGAS; preventing the formation of liquid-like droplets in which CGAS is activated. Phosphorylated. The non-phosphorylated form(s) exhibited the strongest poly(rC)-binding activity. In terms of processing, (Microbial infection) Proteolytically cleaved by picornavirus proteinase 3CD. As to expression, detected in all tissues examined.

It is found in the nucleus. It localises to the cytoplasm. Its function is as follows. Single-stranded nucleic acid binding protein that binds preferentially to oligo dC. Major cellular poly(rC)-binding protein. Also binds poly(rU). Acts as a negative regulator of antiviral signaling. Negatively regulates cellular antiviral responses mediated by MAVS signaling. It acts as an adapter between MAVS and the E3 ubiquitin ligase ITCH, therefore triggering MAVS ubiquitination and degradation. Negativeley regulates the cGAS-STING pathway via interaction with CGAS, preventing the formation of liquid-like droplets in which CGAS is activated. Together with PCBP1, required for erythropoiesis, possibly by regulating mRNA splicing. Functionally, (Microbial infection) In case of infection by poliovirus, binds to the viral internal ribosome entry site (IRES) and stimulates the IRES-mediated translation. Also plays a role in initiation of viral RNA replication in concert with the viral protein 3CD. This is Poly(rC)-binding protein 2 from Homo sapiens (Human).